Reading from the N-terminus, the 153-residue chain is Ubiquitin/ISG15-conjugating enzyme E2 L6 (153 aa).

In terms of domain architecture, UBC core spans 2 to 149 (TASKRVAKEL…AEEFTLQYGV (148 aa)). Cysteine 86 acts as the Glycyl thioester intermediate in catalysis.

This sequence belongs to the ubiquitin-conjugating enzyme family. As to quaternary structure, interacts with RNF19A, RNF19B and RNF144B. Interacts with FLT3 (tyrosine phosphorylated). ISGylated.

The catalysed reaction is S-ubiquitinyl-[E1 ubiquitin-activating enzyme]-L-cysteine + [E2 ubiquitin-conjugating enzyme]-L-cysteine = [E1 ubiquitin-activating enzyme]-L-cysteine + S-ubiquitinyl-[E2 ubiquitin-conjugating enzyme]-L-cysteine.. It participates in protein modification; protein ubiquitination. Catalyzes the covalent attachment of ubiquitin to other proteins. Functions in the E6/E6-AP-induced ubiquitination of p53/TP53. Promotes ubiquitination and subsequent proteasomal degradation of FLT3. The protein is Ubiquitin/ISG15-conjugating enzyme E2 L6 (Ube2l6) of Rattus norvegicus (Rat).